Reading from the N-terminus, the 216-residue chain is Pyridoxine/pyridoxamine 5'-phosphate oxidase 1 (216 aa).

Substrate-binding positions include 10-13 (RREY) and Lys68. FMN contacts are provided by residues 63–68 (RIVLLK), 78–79 (YT), Lys85, and Gln107. Substrate-binding residues include Tyr125, Arg129, and Ser133. FMN contacts are provided by residues 142–143 (QS) and Trp186. 192-194 (RLH) is a substrate binding site. Arg196 is a binding site for FMN.

Belongs to the pyridoxamine 5'-phosphate oxidase family. Homodimer. It depends on FMN as a cofactor.

The catalysed reaction is pyridoxamine 5'-phosphate + O2 + H2O = pyridoxal 5'-phosphate + H2O2 + NH4(+). It catalyses the reaction pyridoxine 5'-phosphate + O2 = pyridoxal 5'-phosphate + H2O2. Its pathway is cofactor metabolism; pyridoxal 5'-phosphate salvage; pyridoxal 5'-phosphate from pyridoxamine 5'-phosphate: step 1/1. It participates in cofactor metabolism; pyridoxal 5'-phosphate salvage; pyridoxal 5'-phosphate from pyridoxine 5'-phosphate: step 1/1. Its function is as follows. Catalyzes the oxidation of either pyridoxine 5'-phosphate (PNP) or pyridoxamine 5'-phosphate (PMP) into pyridoxal 5'-phosphate (PLP). This Hydrogenovibrio crunogenus (strain DSM 25203 / XCL-2) (Thiomicrospira crunogena) protein is Pyridoxine/pyridoxamine 5'-phosphate oxidase 1.